A 937-amino-acid polypeptide reads, in one-letter code: Protocadherin alpha-7 (937 aa).

An N-terminal signal peptide occupies residues 1–29 (MVNLRGYNWKSQQLLLFLIIVAAWEAGSG). Topologically, residues 30–697 (QLHYSVPEEA…RVDQRLVDVN (668 aa)) are extracellular. Cadherin domains lie at 34 to 133 (SVPE…PPMF), 157 to 242 (ASDA…APVF), 243 to 350 (DRSL…APQL), 351 to 455 (TVSS…APLF), 456 to 565 (AQPE…APTL), and 587 to 682 (PGQV…SSKV). A disulfide bridge connects residues C96 and C102. T223 and T225 each carry an O-linked (Man) threonine glycan. N-linked (GlcNAc...) asparagine glycosylation is found at N257 and N265. Residue T438 is glycosylated (O-linked (Man) threonine). The O-linked (Man) serine glycan is linked to S478. An N-linked (GlcNAc...) asparagine glycan is attached at N548. A helical membrane pass occupies residues 698 to 718 (VYLIIAICAVSSLLVLTLLLY). The Cytoplasmic segment spans residues 719 to 937 (TALRCSATPT…GNSTTDNSDQ (219 aa)). Disordered regions lie at residues 755 to 794 (RQRVCSGEGPPKTDLMAFSPSLPQGPSSTDNPRQPNPDWR) and 816 to 843 (RAGPGGPDQQWPTVSSATPEPEAGEVSP). 5 PXXP repeats span residues 774 to 777 (PSLP), 786 to 789 (PRQP), 819 to 822 (PGGP), 860 to 863 (PGNP), and 878 to 881 (PGSP). A 5 X 4 AA repeats of P-X-X-P region spans residues 774–881 (PSLPQGPSST…PDKFIIPGSP (108 aa)). The segment covering 775–787 (SLPQGPSSTDNPR) has biased composition (polar residues). Residues 887 to 937 (RQEPANNQIDKSDFITFGKKEETKKKKKKKKGNKTQEKKEKGNSTTDNSDQ) form a disordered region. The span at 896–910 (DKSDFITFGKKEETK) shows a compositional bias: basic and acidic residues.

In terms of assembly, forms homodimers in trans (molecules expressed by two different cells). Forms promiscuous heterodimers in cis (at the plasma membrane of the same cell) with other protocadherins.

The protein resides in the cell membrane. Its function is as follows. Calcium-dependent cell-adhesion protein involved in cells self-recognition and non-self discrimination. Thereby, it is involved in the establishment and maintenance of specific neuronal connections in the brain. The protein is Protocadherin alpha-7 of Mus musculus (Mouse).